We begin with the raw amino-acid sequence, 154 residues long: 6,7-dimethyl-8-ribityllumazine synthase (154 aa).

5-amino-6-(D-ribitylamino)uracil is bound by residues tryptophan 22, 56 to 58 (AWE), and 80 to 82 (CVI). Position 85-86 (85-86 (DT)) interacts with (2S)-2-hydroxy-3-oxobutyl phosphate. Catalysis depends on histidine 88, which acts as the Proton donor. Asparagine 113 lines the 5-amino-6-(D-ribitylamino)uracil pocket. Arginine 127 lines the (2S)-2-hydroxy-3-oxobutyl phosphate pocket.

It belongs to the DMRL synthase family. As to quaternary structure, forms an icosahedral capsid composed of 60 subunits, arranged as a dodecamer of pentamers.

It catalyses the reaction (2S)-2-hydroxy-3-oxobutyl phosphate + 5-amino-6-(D-ribitylamino)uracil = 6,7-dimethyl-8-(1-D-ribityl)lumazine + phosphate + 2 H2O + H(+). It functions in the pathway cofactor biosynthesis; riboflavin biosynthesis; riboflavin from 2-hydroxy-3-oxobutyl phosphate and 5-amino-6-(D-ribitylamino)uracil: step 1/2. Catalyzes the formation of 6,7-dimethyl-8-ribityllumazine by condensation of 5-amino-6-(D-ribitylamino)uracil with 3,4-dihydroxy-2-butanone 4-phosphate. This is the penultimate step in the biosynthesis of riboflavin. The sequence is that of 6,7-dimethyl-8-ribityllumazine synthase from Xanthomonas oryzae pv. oryzae (strain MAFF 311018).